Consider the following 142-residue polypeptide: Large ribosomal subunit protein uL13 (142 aa).

It belongs to the universal ribosomal protein uL13 family. In terms of assembly, part of the 50S ribosomal subunit.

This protein is one of the early assembly proteins of the 50S ribosomal subunit, although it is not seen to bind rRNA by itself. It is important during the early stages of 50S assembly. The protein is Large ribosomal subunit protein uL13 of Mannheimia succiniciproducens (strain KCTC 0769BP / MBEL55E).